A 386-amino-acid chain; its full sequence is Putative prophage major tail sheath protein (386 aa).

Belongs to the myoviridae tail sheath protein family.

Its subcellular location is the secreted. The chain is Putative prophage major tail sheath protein from Pseudomonas aeruginosa (strain UCBPP-PA14).